The following is a 463-amino-acid chain: Protoheme IX farnesyltransferase (463 aa).

Residues 1 to 193 (MAESRTFTGL…AYFRLMKPRL (193 aa)) form a unknown region. Helical transmembrane passes span 6-26 (TFTG…LAGA), 54-74 (LLVA…VVAM), 89-109 (AAII…AIVA), and 115-135 (ALPG…VLAL). The interval 144–170 (GSDDETPVKNPTPAPEPAGDDTPDRTP) is disordered. Transmembrane regions (helical) follow at residues 193-213 (LMWL…GQTL), 218-238 (VLLT…FNHV), 265-285 (ALAF…QVNA), 286-306 (LVAV…TLVL), 314-334 (TVLG…AADG), 336-356 (VGLP…AHFY), 387-407 (IVYY…LTPL), 409-429 (WLYA…VVLL), and 441-461 (AFHA…VDAL). The interval 194–460 (MWLLCLVAAA…AVLIAIVVDA (267 aa)) is protoheme IX prenyltransferase.

This sequence in the C-terminal section; belongs to the UbiA prenyltransferase family. Protoheme IX farnesyltransferase subfamily.

The protein resides in the cell membrane. The enzyme catalyses heme b + (2E,6E)-farnesyl diphosphate + H2O = Fe(II)-heme o + diphosphate. The protein operates within porphyrin-containing compound metabolism; heme O biosynthesis; heme O from protoheme: step 1/1. Converts heme B (protoheme IX) to heme O by substitution of the vinyl group on carbon 2 of heme B porphyrin ring with a hydroxyethyl farnesyl side group. This is Protoheme IX farnesyltransferase (ctaB) from Haloarcula marismortui (strain ATCC 43049 / DSM 3752 / JCM 8966 / VKM B-1809) (Halobacterium marismortui).